Reading from the N-terminus, the 232-residue chain is Small ribosomal subunit protein uS3 (232 aa).

A KH type-2 domain is found at 39-107; sequence IRAILHKELK…DVVINIVEIR (69 aa).

It belongs to the universal ribosomal protein uS3 family. Part of the 30S ribosomal subunit. Forms a tight complex with proteins S10 and S14.

Functionally, binds the lower part of the 30S subunit head. Binds mRNA in the 70S ribosome, positioning it for translation. This is Small ribosomal subunit protein uS3 from Rhodopseudomonas palustris (strain BisA53).